The primary structure comprises 154 residues: Periplasmic nitrate reductase, electron transfer subunit (154 aa).

An N-terminal signal peptide occupies residues 1 to 24; it reads MSMHPALRLLATVLVALGAGPAFT. Residues 27–47 are disordered; it reads APRLTGADRPMSEVAAPPLPE. Heme c is bound by residues His68, Cys82, Cys85, His86, His103, Cys122, Cys125, and His126.

Belongs to the NapB family. As to quaternary structure, component of the periplasmic nitrate reductase NapAB complex composed of NapA and NapB. In terms of processing, binds 2 heme C groups per subunit.

Its subcellular location is the periplasm. Its function is as follows. Electron transfer subunit of the periplasmic nitrate reductase complex NapAB. Receives electrons from the membrane-anchored tetraheme c-type NapC protein and transfers these to NapA subunit, thus allowing electron flow between membrane and periplasm. Essential for periplasmic nitrate reduction with nitrate as the terminal electron acceptor. In Cereibacter sphaeroides (Rhodobacter sphaeroides), this protein is Periplasmic nitrate reductase, electron transfer subunit.